We begin with the raw amino-acid sequence, 572 residues long: Transmembrane glycoprotein NMB (572 aa).

The signal sequence occupies residues 1–22 (MESLCGVLVFLLLAAGLPLQAA). The Extracellular segment spans residues 23 to 500 (KRFRDVLGHE…DLGSPLRTVN (478 aa)). Residues Asn93, Asn134, Asn200, Asn249, Asn275, Asn296, Asn300, Asn306, and Asn312 are each glycosylated (N-linked (GlcNAc...) asparagine). In terms of domain architecture, PKD spans 251–338 (SDETFLRDLP…SPSSSTSPSP (88 aa)). The segment at 321-359 (GPCPSPTPSPSSSTSPSPASSPSPTLSTPSPSLMPTGHK) is disordered. Positions 330–356 (PSSSTSPSPASSPSPTLSTPSPSLMPT) are enriched in low complexity. Residues Asn461 and Asn469 are each glycosylated (N-linked (GlcNAc...) asparagine). The chain crosses the membrane as a helical span at residues 501-521 (GVLISIGCLAMFVTMVTILLY). At 522-572 (KKHKTYKPIGNCTRNVVKGKGLSVFLSHAKAPFSRGDREKDPLLQDKPWML) the chain is on the cytoplasmic side. The residue at position 544 (Ser544) is a Phosphoserine. The Cell attachment site motif lies at 556 to 558 (RGD).

This sequence belongs to the PMEL/NMB family.

The protein resides in the cell membrane. It localises to the melanosome membrane. The protein localises to the early endosome membrane. Could be a melanogenic enzyme. In Rattus norvegicus (Rat), this protein is Transmembrane glycoprotein NMB (Gpnmb).